The primary structure comprises 196 residues: MGTQLVLGSSSKIRKAVLEAFRIPFICVSSDFDERSITYSGDPFEYTRELAWNKANAVRSQGFSDSLIITADTVVVYEGEVFNKPESEEHAVEMLRTLSGTSHSVITSLVLMQNEKVASASETTQVSFIDIPPQHLKTYVQAFSSLKRCGGYCVQDGGGLIIKQIEGCVYNIQGLPIKTLNQLLMEFNISLWDYLA.

Aspartate 72 functions as the Proton acceptor in the catalytic mechanism.

This sequence belongs to the Maf family. It depends on a divalent metal cation as a cofactor.

The protein resides in the cytoplasm. The enzyme catalyses a ribonucleoside 5'-triphosphate + H2O = a ribonucleoside 5'-phosphate + diphosphate + H(+). It catalyses the reaction a 2'-deoxyribonucleoside 5'-triphosphate + H2O = a 2'-deoxyribonucleoside 5'-phosphate + diphosphate + H(+). Its function is as follows. Nucleoside triphosphate pyrophosphatase. May have a dual role in cell division arrest and in preventing the incorporation of modified nucleotides into cellular nucleic acids. In Chlamydia muridarum (strain MoPn / Nigg), this protein is Nucleoside triphosphate pyrophosphatase.